The sequence spans 111 residues: Nucleoid-associated protein Teth39_2199 (111 aa).

It belongs to the YbaB/EbfC family. As to quaternary structure, homodimer.

It is found in the cytoplasm. It localises to the nucleoid. Its function is as follows. Binds to DNA and alters its conformation. May be involved in regulation of gene expression, nucleoid organization and DNA protection. The sequence is that of Nucleoid-associated protein Teth39_2199 from Thermoanaerobacter pseudethanolicus (strain ATCC 33223 / 39E) (Clostridium thermohydrosulfuricum).